We begin with the raw amino-acid sequence, 367 residues long: MSIDTVHVDLGARSYDVRIGQGLLARAGEEIVALAGPRRVAILTDETVAALHLPALRESLAGQGIEAPALALPAGEATKCWAELGRAVEWLLAQRIERKDLVIALGGGVIGDLAGFAAAILRRGVRFVQIPTTLLAQVDSSVGGKTGINSPQGKNLIGAFHQPALVLADIDVLTTLSPRDFRAGYGEVAKYGLLGDEGFFEWLEANAAGLASDPALRQRAVRHSVEMKAGIVQRDETEQGERALLNLGHTFGHALESATGYSDRLLHGEGVAIGCALAFELSAKMGLCSQEAPSRVAAHLAAMGMPARIADIPGDLPDDEALIGLMAQDKKVQDGRLRFVLAHGIGRAFVTDAVDPALLRQVLAQSR.

Residues 108 to 112 (GVIGD), 132 to 133 (TT), Lys-145, and Lys-154 each bind NAD(+). Zn(2+)-binding residues include Glu-187, His-249, and His-267.

Belongs to the sugar phosphate cyclases superfamily. Dehydroquinate synthase family. It depends on Co(2+) as a cofactor. Zn(2+) serves as cofactor. Requires NAD(+) as cofactor.

It is found in the cytoplasm. It catalyses the reaction 7-phospho-2-dehydro-3-deoxy-D-arabino-heptonate = 3-dehydroquinate + phosphate. It participates in metabolic intermediate biosynthesis; chorismate biosynthesis; chorismate from D-erythrose 4-phosphate and phosphoenolpyruvate: step 2/7. In terms of biological role, catalyzes the conversion of 3-deoxy-D-arabino-heptulosonate 7-phosphate (DAHP) to dehydroquinate (DHQ). In Paracoccus denitrificans (strain Pd 1222), this protein is 3-dehydroquinate synthase.